The chain runs to 208 residues: MAKYNDSKCRICRREGGKLFLKGDRCYTDKCAFDRRPYAPGQHGRARKKNSDYAVQLREKQKVRRMYGLLEKQFHSYFVKADMSKGVTGSNLLSILERRLDNVIYRLGFANSRSQARQMVRHGIFTVNGRKATIPSIQVKVGDVIEVREKNRKMPVIAEAQEVIARRGCPSWLEADGPNFRGVVKALPQREDIQFPMSEQLIVELYSK.

The S4 RNA-binding domain maps to 98-161 (RRLDNVIYRL…RKMPVIAEAQ (64 aa)).

Belongs to the universal ribosomal protein uS4 family. Part of the 30S ribosomal subunit. Contacts protein S5. The interaction surface between S4 and S5 is involved in control of translational fidelity.

One of the primary rRNA binding proteins, it binds directly to 16S rRNA where it nucleates assembly of the body of the 30S subunit. In terms of biological role, with S5 and S12 plays an important role in translational accuracy. The chain is Small ribosomal subunit protein uS4 from Oleidesulfovibrio alaskensis (strain ATCC BAA-1058 / DSM 17464 / G20) (Desulfovibrio alaskensis).